The chain runs to 188 residues: Photosystem I assembly protein Ycf4 (188 aa).

The next 2 membrane-spanning stretches (helical) occupy residues 26–46 and 68–88; these read YFWA…GLSS and LVMG…WFVI.

Belongs to the Ycf4 family.

The protein localises to the cellular thylakoid membrane. Seems to be required for the assembly of the photosystem I complex. The sequence is that of Photosystem I assembly protein Ycf4 from Synechococcus sp. (strain ATCC 27144 / PCC 6301 / SAUG 1402/1) (Anacystis nidulans).